We begin with the raw amino-acid sequence, 531 residues long: RNA-binding protein RO60 (531 aa).

The 337-residue stretch at 24-360 (VRNNAGGFVY…AFGNVQPANT (337 aa)) folds into the TROVE domain. The segment at 128-274 (RTGTMLLHFL…TNGLTWLLRN (147 aa)) is RNA-binding. Positions 352 to 531 (FGNVQPANTR…VMTAFARGEV (180 aa)) are VWFA-like domain. Residues Ser369, Ser371, and Thr438 each contribute to the a divalent metal cation site.

It belongs to the Ro 60 kDa family. Forms oligomers upon binding DrY RNA, The multimers are of an average size of 700 kDa and are composed of around 12 molecules of Rsr-DrY RNA.

It localises to the cytoplasm. Binds to several small RNAs that accumulate during recovery from UV irradiation. Contributes to the resistance of D.radiodurans to ultraviolet irradiation. This Deinococcus radiodurans (strain ATCC 13939 / DSM 20539 / JCM 16871 / CCUG 27074 / LMG 4051 / NBRC 15346 / NCIMB 9279 / VKM B-1422 / R1) protein is RNA-binding protein RO60.